Here is a 227-residue protein sequence, read N- to C-terminus: Cytidylate kinase (227 aa).

Position 10 to 18 (10 to 18) interacts with ATP; that stretch reads GPASSGKST.

Belongs to the cytidylate kinase family. Type 1 subfamily.

The protein resides in the cytoplasm. It catalyses the reaction CMP + ATP = CDP + ADP. The enzyme catalyses dCMP + ATP = dCDP + ADP. The polypeptide is Cytidylate kinase (Streptococcus agalactiae serotype III (strain NEM316)).